Reading from the N-terminus, the 264-residue chain is 14-3-3 protein homolog (264 aa).

A compositionally biased stretch (low complexity) spans 236 to 258 (SEAPAATEEQQQSSQAPAAQPTE). Residues 236-264 (SEAPAATEEQQQSSQAPAAQPTEGKADQE) form a disordered region.

The protein belongs to the 14-3-3 family.

The sequence is that of 14-3-3 protein homolog (BMH1) from Candida albicans (strain SC5314 / ATCC MYA-2876) (Yeast).